The primary structure comprises 64 residues: Large ribosomal subunit protein bL35c (64 aa).

It belongs to the bacterial ribosomal protein bL35 family.

It localises to the plastid. The protein resides in the chloroplast. The sequence is that of Large ribosomal subunit protein bL35c from Phaeodactylum tricornutum (strain CCAP 1055/1).